The following is a 446-amino-acid chain: Histidine--tRNA ligase (446 aa).

Belongs to the class-II aminoacyl-tRNA synthetase family. Homodimer.

The protein localises to the cytoplasm. It catalyses the reaction tRNA(His) + L-histidine + ATP = L-histidyl-tRNA(His) + AMP + diphosphate + H(+). The chain is Histidine--tRNA ligase from Burkholderia ambifaria (strain MC40-6).